The chain runs to 388 residues: MRYFTAGESHGPRLTAIIEGVPAGLSLSAEDINIELKRRQGGYGRGGRMKIESDQVEITSGVRHGKTIGSPITLNVTNRDFKNWEQIMAAQDVEDKIKKQRRLTKPRPGHADLVGGMKYEFEDLRNVLERSSARETTMRVAVGAVAKKLLHELEIEIANHVVNFGGREITSPENLSVQDIRQTAGLSDLSIFDESQAEELRNYIDQIKKAGDTIGGIIETRVEGVPAGLGSYVQYDRKLDAKIAAAVVSINAFKGVEFGLGFEAGKRPGSQVMDEIIWSEDKGYTRSSNQLGGFEGGMTNGEQVIVRGVMKPIPTLYKPLMSIDIESHEPYKASVERSDPTALPAAGVVMENVVATVVAQEICDKFDSDTMNELRDAVASYKKRLSEY.

Arg39 and Arg45 together coordinate NADP(+). FMN is bound by residues 130 to 132 (RSS), 251 to 252 (NA), Gly296, 311 to 315 (KPIPT), and Arg337.

The protein belongs to the chorismate synthase family. Homotetramer. It depends on FMNH2 as a cofactor.

The enzyme catalyses 5-O-(1-carboxyvinyl)-3-phosphoshikimate = chorismate + phosphate. Its pathway is metabolic intermediate biosynthesis; chorismate biosynthesis; chorismate from D-erythrose 4-phosphate and phosphoenolpyruvate: step 7/7. Its function is as follows. Catalyzes the anti-1,4-elimination of the C-3 phosphate and the C-6 proR hydrogen from 5-enolpyruvylshikimate-3-phosphate (EPSP) to yield chorismate, which is the branch point compound that serves as the starting substrate for the three terminal pathways of aromatic amino acid biosynthesis. This reaction introduces a second double bond into the aromatic ring system. The sequence is that of Chorismate synthase from Lactococcus lactis subsp. lactis (strain IL1403) (Streptococcus lactis).